The primary structure comprises 115 residues: Guanylin (115 aa).

An N-terminal signal peptide occupies residues 1 to 21 (MNACVLSVLCLLGAVAVLVEG). Positions 22–100 (VTVQDGDLSF…LQRLEAIAQD (79 aa)) are excised as a propeptide. Intrachain disulfides connect Cys-69/Cys-82, Cys-104/Cys-112, and Cys-107/Cys-115.

The protein belongs to the guanylin family.

It localises to the secreted. Functionally, endogenous activator of intestinal guanylate cyclase. It stimulates this enzyme through the same receptor binding region as the heat-stable enterotoxins. This is Guanylin (GUCA2A) from Notomys alexis (Spinifex hopping mouse).